Consider the following 330-residue polypeptide: ADP-L-glycero-D-manno-heptose-6-epimerase (330 aa).

NADP(+) is bound by residues 11 to 12, 32 to 33, Lys39, Lys54, 75 to 79, and Asn92; these read FI, DN, and EGACS. The active-site Proton acceptor is Tyr139. Lys143 lines the NADP(+) pocket. Asn168 serves as a coordination point for substrate. Val169 and Lys177 together coordinate NADP(+). The Proton acceptor role is filled by Lys177. Substrate contacts are provided by residues Arg179, His186, 200-203, Arg213, and Tyr292; that span reads FGEY.

The protein belongs to the NAD(P)-dependent epimerase/dehydratase family. HldD subfamily. As to quaternary structure, homopentamer. The cofactor is NADP(+).

It carries out the reaction ADP-D-glycero-beta-D-manno-heptose = ADP-L-glycero-beta-D-manno-heptose. Its pathway is nucleotide-sugar biosynthesis; ADP-L-glycero-beta-D-manno-heptose biosynthesis; ADP-L-glycero-beta-D-manno-heptose from D-glycero-beta-D-manno-heptose 7-phosphate: step 4/4. In terms of biological role, catalyzes the interconversion between ADP-D-glycero-beta-D-manno-heptose and ADP-L-glycero-beta-D-manno-heptose via an epimerization at carbon 6 of the heptose. The polypeptide is ADP-L-glycero-D-manno-heptose-6-epimerase (Burkholderia thailandensis (strain ATCC 700388 / DSM 13276 / CCUG 48851 / CIP 106301 / E264)).